The following is a 447-amino-acid chain: tRNA-2-methylthio-N(6)-dimethylallyladenosine synthase (447 aa).

One can recognise an MTTase N-terminal domain in the interval 8 to 126 (KKVVTLAYGC…FQRLLEEAEE (119 aa)). The [4Fe-4S] cluster site is built by C17, C53, C87, C162, C166, and C169. Residues 148-378 (AKGKLKAYVN…ITVQNAQSLA (231 aa)) enclose the Radical SAM core domain. The TRAM domain occupies 381–444 (QEMIGKTCEV…SWTLFGECRA (64 aa)).

It belongs to the methylthiotransferase family. MiaB subfamily. Monomer. The cofactor is [4Fe-4S] cluster.

Its subcellular location is the cytoplasm. The enzyme catalyses N(6)-dimethylallyladenosine(37) in tRNA + (sulfur carrier)-SH + AH2 + 2 S-adenosyl-L-methionine = 2-methylsulfanyl-N(6)-dimethylallyladenosine(37) in tRNA + (sulfur carrier)-H + 5'-deoxyadenosine + L-methionine + A + S-adenosyl-L-homocysteine + 2 H(+). Catalyzes the methylthiolation of N6-(dimethylallyl)adenosine (i(6)A), leading to the formation of 2-methylthio-N6-(dimethylallyl)adenosine (ms(2)i(6)A) at position 37 in tRNAs that read codons beginning with uridine. This is tRNA-2-methylthio-N(6)-dimethylallyladenosine synthase from Desulfitobacterium hafniense (strain Y51).